The sequence spans 108 residues: Ig kappa chain V-V region HP 124E1 (108 aa).

The segment at 1-23 (DIQMTQTTSSLSASLGDRVTISC) is framework-1. Residues Cys23 and Cys88 are joined by a disulfide bond. Residues 24–34 (RASQDINNYLN) form a complementarity-determining-1 region. A framework-2 region spans residues 35-49 (WYQQKPDGTVKLLIY). The tract at residues 50–56 (YTSRLHS) is complementarity-determining-2. A framework-3 region spans residues 57-88 (GVPSRFSGSGSGTDYSLTISNLEQEDIATYFC). A complementarity-determining-3 region spans residues 89–97 (QQGKTLPRT). The segment at 98 to 108 (FGGGTKLEIKR) is framework-4.

The sequence is that of Ig kappa chain V-V region HP 124E1 from Mus musculus (Mouse).